The following is a 215-amino-acid chain: Large ribosomal subunit protein uL4 (215 aa).

A disordered region spans residues 43-97 (RRQGTHSTKTRAEVSGGGKKPWRQKGTGRARAGSTRSPIWVGGGKTHTPKPRDYS).

The protein belongs to the universal ribosomal protein uL4 family. As to quaternary structure, part of the 50S ribosomal subunit.

In terms of biological role, one of the primary rRNA binding proteins, this protein initially binds near the 5'-end of the 23S rRNA. It is important during the early stages of 50S assembly. It makes multiple contacts with different domains of the 23S rRNA in the assembled 50S subunit and ribosome. Its function is as follows. Forms part of the polypeptide exit tunnel. This chain is Large ribosomal subunit protein uL4, found in Brachyspira hyodysenteriae (strain ATCC 49526 / WA1).